Here is a 153-residue protein sequence, read N- to C-terminus: Regulatory protein RecX (153 aa).

The protein belongs to the RecX family.

The protein resides in the cytoplasm. Functionally, modulates RecA activity. This Vibrio vulnificus (strain CMCP6) protein is Regulatory protein RecX.